The sequence spans 397 residues: Tryptophan synthase beta chain (397 aa).

Lysine 87 is subject to N6-(pyridoxal phosphate)lysine.

This sequence belongs to the TrpB family. In terms of assembly, tetramer of two alpha and two beta chains. Pyridoxal 5'-phosphate is required as a cofactor.

The enzyme catalyses (1S,2R)-1-C-(indol-3-yl)glycerol 3-phosphate + L-serine = D-glyceraldehyde 3-phosphate + L-tryptophan + H2O. It functions in the pathway amino-acid biosynthesis; L-tryptophan biosynthesis; L-tryptophan from chorismate: step 5/5. The beta subunit is responsible for the synthesis of L-tryptophan from indole and L-serine. In Escherichia fergusonii (strain ATCC 35469 / DSM 13698 / CCUG 18766 / IAM 14443 / JCM 21226 / LMG 7866 / NBRC 102419 / NCTC 12128 / CDC 0568-73), this protein is Tryptophan synthase beta chain.